The following is a 627-amino-acid chain: uncharacterized protein (627 aa).

Disordered stretches follow at residues Glu57–Asp82, Pro96–Gly121, Gly160–Tyr184, Ala198–Gly232, Ser247–Pro277, Arg335–Tyr358, and Val449–Ser579. Over residues Ser169–Ala183 the composition is skewed to low complexity. Residues Gln336–Ala357 are compositionally biased toward low complexity. Residues Phe450–Ala464 are compositionally biased toward basic and acidic residues.

This is an uncharacterized protein from Treponema pallidum (strain Nichols).